Consider the following 766-residue polypeptide: Lanosterol synthase ERG7 (766 aa).

The interval 1-47 (MVANSTGRDASALKSRKRAADSESEPLLKQGQPFPKQPRIGSELDKT) is disordered. A PFTB 1 repeat occupies 148-190 (ATAIYNYISARAHPEDGGWGLHIEGESSVFGTLMNYVALRLVG). Catalysis depends on aspartate 482, which acts as the Proton donor. 2 PFTB repeats span residues 586–626 (IRTA…KHIG) and 635–676 (SRRG…VVQT).

This sequence belongs to the terpene cyclase/mutase family.

Its subcellular location is the lipid droplet. The protein localises to the endoplasmic reticulum membrane. The enzyme catalyses (S)-2,3-epoxysqualene = lanosterol. It participates in terpene metabolism; lanosterol biosynthesis; lanosterol from farnesyl diphosphate: step 3/3. The protein operates within steroid metabolism; ergosterol biosynthesis. Its function is as follows. Lanosterol synthase; part of the third module of ergosterol biosynthesis pathway that includes the late steps of the pathway. ERG7 catalyzes the cyclization of (S)-2,3 oxidosqualene to lanosterol, a reaction that forms the sterol core. The third module or late pathway involves the ergosterol synthesis itself through consecutive reactions that mainly occur in the endoplasmic reticulum (ER) membrane. Firstly, the squalene synthase ERG9 catalyzes the condensation of 2 farnesyl pyrophosphate moieties to form squalene, which is the precursor of all steroids. Squalene synthase is crucial for balancing the incorporation of farnesyl diphosphate (FPP) into sterol and nonsterol isoprene synthesis. Secondly, squalene is converted into lanosterol by the consecutive action of the squalene epoxidase ERG1 and the lanosterol synthase ERG7. Then, the delta(24)-sterol C-methyltransferase ERG6 methylates lanosterol at C-24 to produce eburicol. Eburicol is the substrate of the sterol 14-alpha demethylase encoded by CYP51A, CYP51B and CYP51C, to yield 4,4,24-trimethyl ergosta-8,14,24(28)-trienol. CYP51B encodes the enzyme primarily responsible for sterol 14-alpha-demethylation, and plays an essential role in ascospore formation. CYP51A encodes an additional sterol 14-alpha-demethylase, induced on ergosterol depletion and responsible for the intrinsic variation in azole sensitivity. The third CYP51 isoform, CYP51C, does not encode a sterol 14-alpha-demethylase, but is required for full virulence on host wheat ears. The C-14 reductase ERG24 then reduces the C14=C15 double bond which leads to 4,4-dimethylfecosterol. A sequence of further demethylations at C-4, involving the C-4 demethylation complex containing the C-4 methylsterol oxidases ERG25, the sterol-4-alpha-carboxylate 3-dehydrogenase ERG26 and the 3-keto-steroid reductase ERG27, leads to the production of fecosterol via 4-methylfecosterol. ERG28 has a role as a scaffold to help anchor ERG25, ERG26 and ERG27 to the endoplasmic reticulum. The C-8 sterol isomerase ERG2 then catalyzes the reaction which results in unsaturation at C-7 in the B ring of sterols and thus converts fecosterol to episterol. The sterol-C5-desaturases ERG3A and ERG3BB then catalyze the introduction of a C-5 double bond in the B ring to produce 5-dehydroepisterol. The C-22 sterol desaturases ERG5A and ERG5B further convert 5-dehydroepisterol into ergosta-5,7,22,24(28)-tetraen-3beta-ol by forming the C-22(23) double bond in the sterol side chain. Finally, ergosta-5,7,22,24(28)-tetraen-3beta-ol is substrate of the C-24(28) sterol reductase ERG4 to produce ergosterol. The polypeptide is Lanosterol synthase ERG7 (Gibberella zeae (strain ATCC MYA-4620 / CBS 123657 / FGSC 9075 / NRRL 31084 / PH-1) (Wheat head blight fungus)).